The following is a 142-amino-acid chain: Large ribosomal subunit protein uL11 (142 aa).

It belongs to the universal ribosomal protein uL11 family. In terms of assembly, part of the ribosomal stalk of the 50S ribosomal subunit. Interacts with L10 and the large rRNA to form the base of the stalk. L10 forms an elongated spine to which L12 dimers bind in a sequential fashion forming a multimeric L10(L12)X complex. One or more lysine residues are methylated.

Forms part of the ribosomal stalk which helps the ribosome interact with GTP-bound translation factors. In Citrobacter koseri (strain ATCC BAA-895 / CDC 4225-83 / SGSC4696), this protein is Large ribosomal subunit protein uL11.